The following is a 764-amino-acid chain: Protein translocase subunit SecA 2 (764 aa).

Residues Q83, 101–105 (GEGKT), and D490 each bind ATP.

The protein belongs to the SecA family. Monomer and homodimer. Part of the essential Sec protein translocation apparatus which comprises SecA, SecYEG and auxiliary proteins SecDF. Other proteins may also be involved.

It localises to the cell membrane. The protein localises to the cytoplasm. It carries out the reaction ATP + H2O + cellular proteinSide 1 = ADP + phosphate + cellular proteinSide 2.. Part of the Sec protein translocase complex. Interacts with the SecYEG preprotein conducting channel. Has a central role in coupling the hydrolysis of ATP to the transfer of proteins into and across the cell membrane, serving as an ATP-driven molecular motor driving the stepwise translocation of polypeptide chains across the membrane. The polypeptide is Protein translocase subunit SecA 2 (Corynebacterium diphtheriae (strain ATCC 700971 / NCTC 13129 / Biotype gravis)).